A 914-amino-acid polypeptide reads, in one-letter code: Serine/threonine kinase SAD-1 (914 aa).

Residues 47 to 298 (YKLEKTLGKG…LADVFKHPWV (252 aa)) enclose the Protein kinase domain. Residues 53-61 (LGKGQTGLV) and Lys-76 contribute to the ATP site. The active-site Proton acceptor is the Asp-169. Disordered stretches follow at residues 375–551 (AQED…SPPS), 563–590 (TMNSTNSSTNSLIAGNSQTSIGSTSGPW), and 757–914 (NSTQ…ADKV). Residues 393 to 402 (PPKKRTDSSR) show a composition bias toward basic and acidic residues. Over residues 444–462 (RSSTRDLFGSSSSGSYSAR) the composition is skewed to low complexity. Residues 473 to 482 (ASRSTNSYHY) are compositionally biased toward polar residues. Basic and acidic residues predominate over residues 495–526 (AARHVRDAQERRESRDSGRGSSRKESKDRSDK). Low complexity-rich tracts occupy residues 527-551 (SASSSSCKNDASSTSSVPHKYSPPS) and 563-573 (TMNSTNSSTNS). The segment covering 574–590 (LIAGNSQTSIGSTSGPW) has biased composition (polar residues). The span at 780–796 (DSSVGSACSDSESNASS) shows a compositional bias: low complexity. A compositionally biased stretch (polar residues) spans 823 to 837 (SMRSVGSGTANSYKS). A compositionally biased stretch (low complexity) spans 850-876 (ASSSSASNRYGPSSSSSGSYSNNADYS). The segment covering 882–903 (SQRSNGSSAPKNQYSPGSQRSF) has biased composition (polar residues).

This sequence belongs to the protein kinase superfamily. CAMK Ser/Thr protein kinase family. SNF1 subfamily. As to quaternary structure, interacts with strd-1 and nab-1. Mg(2+) serves as cofactor. In terms of tissue distribution, expressed in neurons. Colocalizes with strd-1 along the dorsal nerve cord.

The protein localises to the synapse. It carries out the reaction L-seryl-[protein] + ATP = O-phospho-L-seryl-[protein] + ADP + H(+). It catalyses the reaction L-threonyl-[protein] + ATP = O-phospho-L-threonyl-[protein] + ADP + H(+). Functionally, regulates both neuronal polarity and synaptic organization when bound to strd-1. Kinase activity is required for the establishment, but not the maintenance, of both processes. Binding to nab-1 is essential for role in restricting axonal fate during neuronal polarization but is not required for regulating synapse morphology. In Caenorhabditis elegans, this protein is Serine/threonine kinase SAD-1.